The sequence spans 358 residues: Prostaglandin E2 receptor EP2 subtype (358 aa).

Residues M1–E23 are Extracellular-facing. N-linked (GlcNAc...) asparagine glycosylation is found at N3 and N6. The helical transmembrane segment at S24 to A47 threads the bilayer. Residues R48 to S65 are Cytoplasmic-facing. The helical transmembrane segment at L66–A91 threads the bilayer. Residues S92 to Y111 are Extracellular-facing. N-linked (GlcNAc...) asparagine glycosylation is present at N96. C109 and C187 are oxidised to a cystine. Residues F112–L132 traverse the membrane as a helical segment. Residues E133–S151 are Cytoplasmic-facing. The chain crosses the membrane as a helical span at residues G152–G176. Over Q177–Q198 the chain is Extracellular. A helical membrane pass occupies residues L199 to I223. At R224–H262 the chain is on the cytoplasmic side. The disordered stretch occupies residues R231 to R253. A helical transmembrane segment spans residues L263–M286. N287 is a glycosylation site (N-linked (GlcNAc...) asparagine). Residues N287–Q299 are Extracellular-facing. A helical membrane pass occupies residues A300–L323. At R324 to L358 the chain is on the cytoplasmic side.

The protein belongs to the G-protein coupled receptor 1 family. Placenta and lung.

It localises to the cell membrane. Receptor for prostaglandin E2 (PGE2). The activity of this receptor is mediated by G(s) proteins that stimulate adenylate cyclase. The subsequent raise in intracellular cAMP is responsible for the relaxing effect of this receptor on smooth muscle. The protein is Prostaglandin E2 receptor EP2 subtype (PTGER2) of Homo sapiens (Human).